We begin with the raw amino-acid sequence, 733 residues long: Phosphoribosylformylglycinamidine synthase subunit PurL (733 aa).

H44 is an active-site residue. The ATP site is built by Y47 and K86. E88 contributes to the Mg(2+) binding site. Substrate contacts are provided by residues 89-92 and R111; that span reads SHNH. H90 serves as the catalytic Proton acceptor. Position 112 (D112) interacts with Mg(2+). Q240 contributes to the substrate binding site. D268 is a binding site for Mg(2+). 312–314 provides a ligand contact to substrate; that stretch reads ESQ. ATP is bound by residues D496 and G533. N534 lines the Mg(2+) pocket. S536 contributes to the substrate binding site.

Belongs to the FGAMS family. In terms of assembly, monomer. Part of the FGAM synthase complex composed of 1 PurL, 1 PurQ and 2 PurS subunits.

The protein resides in the cytoplasm. The catalysed reaction is N(2)-formyl-N(1)-(5-phospho-beta-D-ribosyl)glycinamide + L-glutamine + ATP + H2O = 2-formamido-N(1)-(5-O-phospho-beta-D-ribosyl)acetamidine + L-glutamate + ADP + phosphate + H(+). It participates in purine metabolism; IMP biosynthesis via de novo pathway; 5-amino-1-(5-phospho-D-ribosyl)imidazole from N(2)-formyl-N(1)-(5-phospho-D-ribosyl)glycinamide: step 1/2. Part of the phosphoribosylformylglycinamidine synthase complex involved in the purines biosynthetic pathway. Catalyzes the ATP-dependent conversion of formylglycinamide ribonucleotide (FGAR) and glutamine to yield formylglycinamidine ribonucleotide (FGAM) and glutamate. The FGAM synthase complex is composed of three subunits. PurQ produces an ammonia molecule by converting glutamine to glutamate. PurL transfers the ammonia molecule to FGAR to form FGAM in an ATP-dependent manner. PurS interacts with PurQ and PurL and is thought to assist in the transfer of the ammonia molecule from PurQ to PurL. The chain is Phosphoribosylformylglycinamidine synthase subunit PurL from Wolinella succinogenes (strain ATCC 29543 / DSM 1740 / CCUG 13145 / JCM 31913 / LMG 7466 / NCTC 11488 / FDC 602W) (Vibrio succinogenes).